The chain runs to 525 residues: Cyclic AMP-responsive element-binding protein 3-like protein 2 (525 aa).

The Cytoplasmic segment spans residues 1-382 (MEIMESGDPV…SCKAAGTQTG (382 aa)). 3 disordered regions span residues 85–104 (LCGDSRPQSPFTHASSDDNF), 203–267 (EALQ…QGSG), and 309–338 (NKISAQESRRKKKEYMDSLEKRVENSSSEN). 2 stretches are compositionally biased toward polar residues: residues 90-102 (RPQSPFTHASSDD) and 213-239 (SSHGSDSEGGQSPTRSLPPSSPVQSQA). The bZIP domain occupies 299–362 (ALKKIRRKIK…RTLLQQLQRL (64 aa)). Residues 301–330 (KKIRRKIKNKISAQESRRKKKEYMDSLEKR) are basic motif. A compositionally biased stretch (basic and acidic residues) spans 322–332 (EYMDSLEKRVE). The segment at 341–362 (LRKKVEVLESTNRTLLQQLQRL) is leucine-zipper. A helical; Signal-anchor for type II membrane protein transmembrane segment spans residues 383–403 (TCLMMVVLCFAVIFGSFTQNL). At 404–525 (DMYSSSSKTI…ELDRTVNTTS (122 aa)) the chain is on the lumenal side. The S1P recognition motif lies at 433–436 (RKLL). Asparagine 490, asparagine 509, and asparagine 522 each carry an N-linked (GlcNAc...) asparagine glycan.

Belongs to the bZIP family. ATF subfamily. In terms of assembly, binds DNA as a dimer. In terms of processing, upon ER stress, translocated to the Golgi apparatus, where it is processed by regulated intramembrane proteolysis (RIP) to release the cytosol-facing N-terminal transcription factor domain. The cleavage is performed sequentially by site-1 and site-2 proteases (S1P/mbtps1 and S2P/mbtps2).

The protein resides in the endoplasmic reticulum membrane. Its subcellular location is the nucleus. Transcription factor involved in unfolded protein response (UPR). In the absence of endoplasmic reticulum (ER) stress, inserted into ER membranes, with N-terminal DNA-binding and transcription activation domains oriented toward the cytosolic face of the membrane. In response to ER stress, transported to the Golgi, where it is cleaved in a site-specific manner by resident proteases S1P/mbtps1 and S2P/mbtps2. The released N-terminal cytosolic domain is translocated to the nucleus to effect transcription of specific target genes. Plays a critical role in chondrogenesis. May protect neuroblastoma cells from ER stress-induced death. In vitro activates transcription of target genes via direct binding to the CRE site. The sequence is that of Cyclic AMP-responsive element-binding protein 3-like protein 2 (creb3l2) from Xenopus laevis (African clawed frog).